We begin with the raw amino-acid sequence, 136 residues long: MKRYILATVIASLVAAPAMALAAGNNILSVHILDQQTGKPAPGVEVVLEQKKDNGWTQLNTGHTDQDGRIKALWPEKAAAPGDYRVIFKTGQYFESKKLDTFFPEIPVEFHISKTNEHYHVPLLLSQYGYSTYRGS.

A signal peptide spans 1 to 20 (MKRYILATVIASLVAAPAMA). Histidine 31, arginine 69, and tyrosine 133 together coordinate substrate.

Belongs to the transthyretin family. 5-hydroxyisourate hydrolase subfamily. Homotetramer.

The protein localises to the periplasm. It catalyses the reaction 5-hydroxyisourate + H2O = 5-hydroxy-2-oxo-4-ureido-2,5-dihydro-1H-imidazole-5-carboxylate + H(+). In terms of biological role, catalyzes the hydrolysis of 5-hydroxyisourate (HIU) to 2-oxo-4-hydroxy-4-carboxy-5-ureidoimidazoline (OHCU). This Salmonella typhimurium (strain LT2 / SGSC1412 / ATCC 700720) protein is 5-hydroxyisourate hydrolase (hiuH).